Consider the following 712-residue polypeptide: Probable GTP diphosphokinase RSH3, chloroplastic (712 aa).

Residues 1–64 (MVVATTIALY…LLFSGASVKS (64 aa)) constitute a chloroplast transit peptide. A compositionally biased stretch (low complexity) spans 65–74 (SSSSSSSHPS). A disordered region spans residues 65–84 (SSSSSSSHPSVGEELASIRH). The HD domain occupies 237 to 338 (YLQHCVETAM…IKLADRLHNM (102 aa)).

Belongs to the RelA/SpoT family.

The protein resides in the plastid. It is found in the chloroplast. It carries out the reaction GTP + ATP = guanosine 3'-diphosphate 5'-triphosphate + AMP. Probable ppGpp (guanosine 3'-diphosphate 5'-diphosphate) synthetase that may be involved in a rapid plant ppGpp-mediated response to pathogens and other stresses. The polypeptide is Probable GTP diphosphokinase RSH3, chloroplastic (RSH3) (Arabidopsis thaliana (Mouse-ear cress)).